The following is a 398-amino-acid chain: MSNSKRTAAIIVAGGRGLRAGAGGPKQYRSLAGQPVIFRAMQPFCTHAEIFAVQPVTSPDDAEMFKLAVAGLNYQPPAPGGATRQGSVRAGLEALAADAPDIVLIHDAARPFVDAALISRAIVAAQITGAAVPTIAVTDTIKQINAQGDVVATPDRARLRIAQTPQAFRFDVILEAHRRAAREGRDDFTDDAAIAEWAGLTVATFEGDVANMKLTTPEDFVREESRLGALLGDIRTGTGYDVHAFGDGDHVWLCGLKVPHNRGFLAHSDGDVGLHALVDAILGALADGDIGSHFPPTDPQWKGAASDKFLKYAVDRVTARGGRIANLEVTMICERPKIGPLREPMRQRIAEITGLPVARIAVKATTSERLGFTGREEGIAATASATLRLPWGTNGLAD.

Residues 1-234 (MSNSKRTAAI…SRLGALLGDI (234 aa)) form a 2-C-methyl-D-erythritol 4-phosphate cytidylyltransferase region. Positions 235–398 (RTGTGYDVHA…LPWGTNGLAD (164 aa)) are 2-C-methyl-D-erythritol 2,4-cyclodiphosphate synthase. The a divalent metal cation site is built by D241 and H243. 4-CDP-2-C-methyl-D-erythritol 2-phosphate contacts are provided by residues 241 to 243 (DVH) and 267 to 268 (HS). H275 contributes to the a divalent metal cation binding site. Residues 289 to 291 (DIG), 365 to 368 (TTSE), F372, and R375 each bind 4-CDP-2-C-methyl-D-erythritol 2-phosphate.

The protein in the N-terminal section; belongs to the IspD/TarI cytidylyltransferase family. IspD subfamily. In the C-terminal section; belongs to the IspF family. Requires a divalent metal cation as cofactor.

The enzyme catalyses 2-C-methyl-D-erythritol 4-phosphate + CTP + H(+) = 4-CDP-2-C-methyl-D-erythritol + diphosphate. It catalyses the reaction 4-CDP-2-C-methyl-D-erythritol 2-phosphate = 2-C-methyl-D-erythritol 2,4-cyclic diphosphate + CMP. Its pathway is isoprenoid biosynthesis; isopentenyl diphosphate biosynthesis via DXP pathway; isopentenyl diphosphate from 1-deoxy-D-xylulose 5-phosphate: step 2/6. It participates in isoprenoid biosynthesis; isopentenyl diphosphate biosynthesis via DXP pathway; isopentenyl diphosphate from 1-deoxy-D-xylulose 5-phosphate: step 4/6. Functionally, bifunctional enzyme that catalyzes the formation of 4-diphosphocytidyl-2-C-methyl-D-erythritol from CTP and 2-C-methyl-D-erythritol 4-phosphate (MEP) (IspD), and catalyzes the conversion of 4-diphosphocytidyl-2-C-methyl-D-erythritol 2-phosphate (CDP-ME2P) to 2-C-methyl-D-erythritol 2,4-cyclodiphosphate (ME-CPP) with a corresponding release of cytidine 5-monophosphate (CMP) (IspF). This Rhodopseudomonas palustris (strain BisB18) protein is Bifunctional enzyme IspD/IspF.